The sequence spans 279 residues: Energy-coupling factor transporter ATP-binding protein EcfA1 (279 aa).

The region spanning 5–240 (IELKKVTFNY…GDELLQLGLD (236 aa)) is the ABC transporter domain. Position 40-47 (40-47 (GHNGSGKS)) interacts with ATP.

It belongs to the ABC transporter superfamily. Energy-coupling factor EcfA family. In terms of assembly, forms a stable energy-coupling factor (ECF) transporter complex composed of 2 membrane-embedded substrate-binding proteins (S component), 2 ATP-binding proteins (A component) and 2 transmembrane proteins (T component).

The protein localises to the cell membrane. In terms of biological role, ATP-binding (A) component of a common energy-coupling factor (ECF) ABC-transporter complex. Unlike classic ABC transporters this ECF transporter provides the energy necessary to transport a number of different substrates. In Streptococcus pyogenes serotype M28 (strain MGAS6180), this protein is Energy-coupling factor transporter ATP-binding protein EcfA1.